The following is a 403-amino-acid chain: Microtubule-associated protein tau (403 aa).

The segment covering 1-32 (MAEPRQEFDVMEDHAQGDYTLQDHEGDMEPGL) has biased composition (basic and acidic residues). The interval 1–219 (MAEPRQEFDV…GPMPDLKNVK (219 aa)) is disordered. Ala2 is modified (N-acetylalanine). At Tyr19 the chain carries Phosphotyrosine. A Glycyl lysine isopeptide (Lys-Gly) (interchain with G-Cter in ubiquitin) cross-link involves residue Lys33. Ser35 and Ser50 each carry phosphoserine. A compositionally biased stretch (polar residues) spans 50-60 (SETSDAKSTPT). 3 positions are modified to phosphothreonine: Thr58, Thr60, and Thr71. A compositionally biased stretch (basic and acidic residues) spans 90-106 (KGKDGTGPDDKKAKGAD). Residue Thr115 is modified to Phosphothreonine. The residue at position 117 (Arg117) is an Omega-N-methylarginine. Lys125 carries the post-translational modification N6,N6-dimethyllysine; alternate. The residue at position 125 (Lys125) is an N6-acetyllysine; alternate. Residues Thr131, Thr137, Thr138, and Thr143 each carry the phosphothreonine modification. Low complexity predominate over residues 136–147 (KTTPTPKTSPGT). Phosphoserine is present on residues Ser153 and Ser157. Residues 156 to 176 (RSGYSSPGSPGTPGSRSRTPS) show a composition bias toward low complexity. Position 159 is a phosphotyrosine (Tyr159). Residues Ser160, Ser161, and Ser164 each carry the phosphoserine modification. Phosphothreonine occurs at positions 167 and 174. Ser176 bears the Phosphoserine mark. Residue Thr179 is modified to Phosphothreonine. Lys187 is modified (N6-acetyllysine). A Phosphothreonine modification is found at Thr193. A phosphoserine mark is found at Ser197 and Ser199. 4 Tau/MAP repeats span residues 206–236 (QAAPGPMPDLKNVKSKIGSTENLKHQPGGGK), 237–267 (VQIINKKLDLSNVQSKCGSKDNIKHVPGGGS), 268–298 (VQIVYKPVDLSKVTSKCGSLGNIHHKPGGGQ), and 299–330 (VEVKSEKLDFKDRVQSKIGSLDNITHVPGGGN). A Glycyl lysine isopeptide (Lys-Gly) (interchain with G-Cter in ubiquitin) cross-link involves residue Lys216. Residue Lys221 is modified to N6-acetyllysine; alternate. Lys221 carries the post-translational modification N6-methyllysine; alternate. Lys221 participates in a covalent cross-link: Glycyl lysine isopeptide (Lys-Gly) (interchain with G-Cter in ubiquitin); alternate. Residue Ser224 is modified to Phosphoserine. Residue Lys229 forms a Glycyl lysine isopeptide (Lys-Gly) (interchain with G-Cter in ubiquitin) linkage. Lys243 bears the N6-acetyllysine; alternate mark. Lys243 participates in a covalent cross-link: Glycyl lysine isopeptide (Lys-Gly) (interchain with G-Cter in ubiquitin); alternate. Phosphoserine occurs at positions 247 and 251. Lys252 is subject to N6-acetyllysine. Residues Cys253 and Cys284 are joined by a disulfide bond. Ser255 carries the post-translational modification Phosphoserine. Lys260 carries the N6-acetyllysine; alternate modification. Lys260 is covalently cross-linked (Glycyl lysine isopeptide (Lys-Gly) (interchain with G-Cter in ubiquitin); alternate). Ser267 carries the phosphoserine modification. Lys273 carries the post-translational modification N6,N6-dimethyllysine; alternate. An N6-acetyllysine; alternate mark is found at Lys273, Lys279, and Lys283. Glycyl lysine isopeptide (Lys-Gly) (interchain with G-Cter in ubiquitin); alternate cross-links involve residues Lys273, Lys279, and Lys283. Phosphoserine is present on Ser286. An N6-acetyllysine; alternate mark is found at Lys293, Lys305, and Lys309. Glycyl lysine isopeptide (Lys-Gly) (interchain with G-Cter in ubiquitin); alternate cross-links involve residues Lys293, Lys305, and Lys309. At Arg311 the chain carries Omega-N-methylarginine. Ser314 bears the Phosphoserine mark. Residue Lys315 forms a Glycyl lysine isopeptide (Lys-Gly) (interchain with G-Cter in ubiquitin) linkage. Position 318 is a phosphoserine (Ser318). At Lys331 the chain carries N6-acetyllysine; alternate. Lys331 participates in a covalent cross-link: Glycyl lysine isopeptide (Lys-Gly) (interchain with G-Cter in ubiquitin); alternate. Lys337 is covalently cross-linked (Glycyl lysine isopeptide (Lys-Gly) (interchain with G-Cter in ubiquitin)). Lys347 carries the N6-acetyllysine; alternate modification. Lys347 participates in a covalent cross-link: Glycyl lysine isopeptide (Lys-Gly) (interchain with G-Cter in ubiquitin); alternate. A Phosphotyrosine modification is found at Tyr356. Ser358 and Ser362 each carry phosphoserine. The segment at 360–379 (VVSGDTSPRHLSNVSSTGSI) is disordered. Residues 363–378 (GDTSPRHLSNVSSTGS) are compositionally biased toward polar residues. A Phosphothreonine modification is found at Thr365. Ser366, Ser371, Ser378, and Ser384 each carry phosphoserine. Thr389 carries the post-translational modification Phosphothreonine.

Interacts with MARK1, MARK2, MARK3 and MARK4. Interacts with SQSTM1 when polyubiquitinated. Interacts with PSMC2 through SQSTM1. Interacts with FKBP4. Binds to CSNK1D. Interacts with SGK1. Interacts with PIN1. Interacts with LRRK2. Interacts with LRP1, leading to endocytosis; this interaction is reduced in the presence of LRPAP1/RAP. Polyubiquitinated. Requires functional TRAF6 and may provoke SQSTM1-dependent degradation by the proteasome. In terms of processing, phosphorylation at various serine and threonine residues in S-P or T-P motifs by proline-directed protein kinases (PDPK1, CDK1, CDK5, GSK3, MAPK) (a few sites per protein in interphase, more in mitosis), and at serine residues in K-X-G-S motifs by MAP/microtubule affinity-regulating kinase (MARK1, MARK2, MARK3, MARK4), causing detachment from microtubules, and their disassembly. Phosphorylation at Ser-224 by BRSK1 and BRSK2 in neurons affects ability to bind microtubules and plays a role in neuron polarization. Phosphorylated by PHK. Dephosphorylation at several serine and threonine residues by the serine/threonine phosphatase PPP5C. As to expression, expressed in neurons.

The protein localises to the cytoplasm. The protein resides in the cytosol. It is found in the cell membrane. It localises to the cytoskeleton. Its subcellular location is the cell projection. The protein localises to the axon. The protein resides in the dendrite. Functionally, promotes microtubule assembly and stability, and might be involved in the establishment and maintenance of neuronal polarity. The C-terminus binds axonal microtubules while the N-terminus binds neural plasma membrane components, suggesting that tau functions as a linker protein between both. Axonal polarity is predetermined by tau localization (in the neuronal cell) in the domain of the cell body defined by the centrosome. The short isoforms allow plasticity of the cytoskeleton whereas the longer isoforms may preferentially play a role in its stabilization. The chain is Microtubule-associated protein tau (MAPT) from Capra hircus (Goat).